A 575-amino-acid polypeptide reads, in one-letter code: U3 small nucleolar RNA-associated protein 9 (575 aa).

Basic and acidic residues-rich tracts occupy residues 340-355 (NEKNNADEADQKKLEE) and 364-375 (VQHEKKETETKI). A disordered region spans residues 340-375 (NEKNNADEADQKKLEEKEEEAQPEVQHEKKETETKI). Residues serine 547 and serine 564 each carry the phosphoserine modification.

Interacts with snoRNA U3. Interacts with MPP10. Component of the ribosomal small subunit (SSU) processome composed of at least 40 protein subunits and snoRNA U3. In the absence of snoRNA3, forms a complex with other t-UTPs. This complex can associate with pre-18S ribosomal RNAs.

The protein resides in the nucleus. It is found in the nucleolus. Involved in nucleolar processing of pre-18S ribosomal RNA. Required for optimal pre-ribosomal RNA transcription by RNA polymerase I together with a subset of U3 proteins required for transcription (t-UTPs). The sequence is that of U3 small nucleolar RNA-associated protein 9 (UTP9) from Saccharomyces cerevisiae (strain ATCC 204508 / S288c) (Baker's yeast).